A 117-amino-acid polypeptide reads, in one-letter code: Large ribosomal subunit protein uL18 (117 aa).

Belongs to the universal ribosomal protein uL18 family. As to quaternary structure, part of the 50S ribosomal subunit; part of the 5S rRNA/L5/L18/L25 subcomplex. Contacts the 5S and 23S rRNAs.

This is one of the proteins that bind and probably mediate the attachment of the 5S RNA into the large ribosomal subunit, where it forms part of the central protuberance. In Yersinia pseudotuberculosis serotype O:1b (strain IP 31758), this protein is Large ribosomal subunit protein uL18.